The following is a 414-amino-acid chain: uncharacterized protein (414 aa).

This sequence belongs to the MG032/MG096/MG288 family.

This is an uncharacterized protein from Mycoplasma genitalium (strain ATCC 33530 / DSM 19775 / NCTC 10195 / G37) (Mycoplasmoides genitalium).